Consider the following 147-residue polypeptide: Hemoglobin subunit beta-1/2 (147 aa).

The residue at position 2 (V2) is an N-acetylvaline. The 145-residue stretch at 3–147 (HLSSEEKSAV…VANALAHKYH (145 aa)) folds into the Globin domain. A Phosphothreonine modification is found at T13. S45 is subject to Phosphoserine. K60 carries the post-translational modification N6-acetyllysine. H64 provides a ligand contact to heme b. K83 bears the N6-acetyllysine mark. H93 is a heme b binding site. Position 94 is an S-nitrosocysteine (C94). At K145 the chain carries N6-acetyllysine.

The protein belongs to the globin family. Heterotetramer of two alpha chains and two beta chains. As to expression, red blood cells.

Involved in oxygen transport from the lung to the various peripheral tissues. The protein is Hemoglobin subunit beta-1/2 (HBB1) of Oryctolagus cuniculus (Rabbit).